The sequence spans 170 residues: Negative modulator of initiation of replication (170 aa).

An interaction with DNA region spans residues 139 to 145; sequence NTNTGRK.

This sequence belongs to the SeqA family. As to quaternary structure, homodimer. Polymerizes to form helical filaments.

Its subcellular location is the cytoplasm. Functionally, negative regulator of replication initiation, which contributes to regulation of DNA replication and ensures that replication initiation occurs exactly once per chromosome per cell cycle. Binds to pairs of hemimethylated GATC sequences in the oriC region, thus preventing assembly of replication proteins and re-initiation at newly replicated origins. Repression is relieved when the region becomes fully methylated. The protein is Negative modulator of initiation of replication of Tolumonas auensis (strain DSM 9187 / NBRC 110442 / TA 4).